Consider the following 212-residue polypeptide: ER lumen protein-retaining receptor 2 (212 aa).

Residues 1 to 4 (MNIF) are Lumenal-facing. The chain crosses the membrane as a helical span at residues 5 to 24 (RLTGDLSHLAAIVILLLKIW). Residues 25-32 (KTRSCAGI) lie on the Cytoplasmic side of the membrane. A helical transmembrane segment spans residues 33–52 (SGKSQLLFALVFTTRYLDLF). The tract at residues 47–48 (RY) is interaction with the K-D-E-L motif on target proteins. Topologically, residues 53–58 (TSFISL) are lumenal. The helical transmembrane segment at 59-79 (YNTSMKVIYLACSYATVYLIY) threads the bilayer. The Cytoplasmic segment spans residues 80-92 (LKFKATYDGNHDT). The chain crosses the membrane as a helical span at residues 93-110 (FRVEFLVVPVGGLSFLVN). Residues 111–116 (HDFSPL) lie on the Lumenal side of the membrane. The helical transmembrane segment at 117 to 135 (EILWTFSIYLESVAILPQL) threads the bilayer. The Cytoplasmic portion of the chain corresponds to 136–149 (FMISKTGEAETITT). Residues 150–168 (HYLFFLGLYRALYLVNWIW) traverse the membrane as a helical segment. Residues 159–169 (RALYLVNWIWR) are interaction with the K-D-E-L motif on target proteins. At 169-178 (RFYFEGFFDL) the chain is on the lumenal side. A helical transmembrane segment spans residues 179–199 (IAVVAGVVQTILYCDFFYLYI). Over 200–212 (TKVLKGKKLSLPA) the chain is Cytoplasmic. Residues 204–207 (KGKK) are important for recycling of cargo proteins with the sequence motif K-D-E-L from the Golgi to the endoplasmic reticulum.

This sequence belongs to the ERD2 family.

The protein resides in the endoplasmic reticulum membrane. The protein localises to the golgi apparatus membrane. Its subcellular location is the cytoplasmic vesicle. It localises to the COPI-coated vesicle membrane. Its function is as follows. Membrane receptor that binds the K-D-E-L sequence motif in the C-terminal part of endoplasmic reticulum resident proteins and maintains their localization in that compartment by participating to their vesicle-mediated recycling back from the Golgi. Binding is pH dependent, and is optimal at pH 5-5.4. The chain is ER lumen protein-retaining receptor 2 (KDELR2) from Homo sapiens (Human).